We begin with the raw amino-acid sequence, 134 residues long: Small ribosomal subunit protein uS9 (134 aa).

The segment at 109 to 134 is disordered; sequence KGDPRRKEPKKFGGRGARARRQKSYR. A compositionally biased stretch (basic residues) spans 115-134; that stretch reads KEPKKFGGRGARARRQKSYR.

Belongs to the universal ribosomal protein uS9 family.

The chain is Small ribosomal subunit protein uS9 from Methanopyrus kandleri (strain AV19 / DSM 6324 / JCM 9639 / NBRC 100938).